The primary structure comprises 291 residues: ATP synthase gamma chain (291 aa).

It belongs to the ATPase gamma chain family. F-type ATPases have 2 components, CF(1) - the catalytic core - and CF(0) - the membrane proton channel. CF(1) has five subunits: alpha(3), beta(3), gamma(1), delta(1), epsilon(1). CF(0) has three main subunits: a, b and c.

The protein resides in the cell inner membrane. Functionally, produces ATP from ADP in the presence of a proton gradient across the membrane. The gamma chain is believed to be important in regulating ATPase activity and the flow of protons through the CF(0) complex. The sequence is that of ATP synthase gamma chain from Cupriavidus metallidurans (strain ATCC 43123 / DSM 2839 / NBRC 102507 / CH34) (Ralstonia metallidurans).